Here is a 684-residue protein sequence, read N- to C-terminus: Acetyl-coenzyme A synthetase 2 (684 aa).

Residues 207 to 210 (RGGK) and Thr326 contribute to the CoA site. ATP-binding positions include 402-404 (GEP), 426-431 (DTMWQT), Asp517, and Arg532. Ser540 contributes to the CoA binding site. Residue Arg543 coordinates ATP. Residue Arg613 coordinates CoA.

It belongs to the ATP-dependent AMP-binding enzyme family.

The enzyme catalyses acetate + ATP + CoA = acetyl-CoA + AMP + diphosphate. This is Acetyl-coenzyme A synthetase 2 (ACS2) from Kluyveromyces lactis (strain ATCC 8585 / CBS 2359 / DSM 70799 / NBRC 1267 / NRRL Y-1140 / WM37) (Yeast).